Here is a 276-residue protein sequence, read N- to C-terminus: Undecaprenyl-diphosphatase 2 (276 aa).

The next 8 helical transmembrane spans lie at 1–21 (MSLW…LFPV), 44–64 (QLLP…LWYF), 87–107 (GHLM…GLLL), 114–134 (VFHD…LLWL), 150–170 (LTFK…IPGF), 190–210 (AAEF…LLEL), 222–242 (DALL…RFLM), and 251–271 (LASF…WFMF).

Belongs to the UppP family.

It localises to the cell inner membrane. It catalyses the reaction di-trans,octa-cis-undecaprenyl diphosphate + H2O = di-trans,octa-cis-undecaprenyl phosphate + phosphate + H(+). Its function is as follows. Catalyzes the dephosphorylation of undecaprenyl diphosphate (UPP). Confers resistance to bacitracin. In Burkholderia thailandensis (strain ATCC 700388 / DSM 13276 / CCUG 48851 / CIP 106301 / E264), this protein is Undecaprenyl-diphosphatase 2.